Here is an 84-residue protein sequence, read N- to C-terminus: Elongation factor 1-beta (84 aa).

Belongs to the EF-1-beta/EF-1-delta family.

Promotes the exchange of GDP for GTP in EF-1-alpha/GDP, thus allowing the regeneration of EF-1-alpha/GTP that could then be used to form the ternary complex EF-1-alpha/GTP/AAtRNA. This Methanoculleus marisnigri (strain ATCC 35101 / DSM 1498 / JR1) protein is Elongation factor 1-beta.